A 230-amino-acid polypeptide reads, in one-letter code: Type II restriction enzyme Eco47I (230 aa).

The enzyme catalyses Endonucleolytic cleavage of DNA to give specific double-stranded fragments with terminal 5'-phosphates.. In terms of biological role, a P subtype restriction enzyme that recognizes the double-stranded sequence 5'-GGWCC-3' and cleaves after G-1. This is Type II restriction enzyme Eco47I from Escherichia coli.